Consider the following 177-residue polypeptide: Large ribosomal subunit protein uL6 (177 aa).

It belongs to the universal ribosomal protein uL6 family. Part of the 50S ribosomal subunit.

Its function is as follows. This protein binds to the 23S rRNA, and is important in its secondary structure. It is located near the subunit interface in the base of the L7/L12 stalk, and near the tRNA binding site of the peptidyltransferase center. The sequence is that of Large ribosomal subunit protein uL6 from Marinomonas sp. (strain MWYL1).